Reading from the N-terminus, the 144-residue chain is Large ribosomal subunit protein uL13 (144 aa).

It belongs to the universal ribosomal protein uL13 family. In terms of assembly, part of the 50S ribosomal subunit.

In terms of biological role, this protein is one of the early assembly proteins of the 50S ribosomal subunit, although it is not seen to bind rRNA by itself. It is important during the early stages of 50S assembly. This Nitrosomonas eutropha (strain DSM 101675 / C91 / Nm57) protein is Large ribosomal subunit protein uL13.